A 337-amino-acid chain; its full sequence is Putative 2-aminoethylphosphonate-binding periplasmic protein (337 aa).

Positions 1 to 21 are cleaved as a signal peptide; it reads MKLSRLALLSVFALASAPSWA.

Belongs to the bacterial solute-binding protein 1 family.

The protein localises to the periplasm. Probably part of the PhnSTUV complex (TC 3.A.1.11.5) involved in 2-aminoethylphosphonate import. In Salmonella paratyphi A (strain ATCC 9150 / SARB42), this protein is Putative 2-aminoethylphosphonate-binding periplasmic protein (phnS).